The chain runs to 160 residues: Troponin C, skeletal muscle (160 aa).

The residue at position 2 (threonine 2) is an N-acetylthreonine. EF-hand domains lie at 15–50, 51–86, 91–126, and 127–160; these read EMIAEFKAAFDMFDADGGGDISVKELGTVMRMLGQT, PTKEELDAIIEEVDEDGSGTIDFEEFLVMMVRQMKE, KSEEELAECFRIFDRNADGYIDPEELAEIFRASGEH, and VTDEEIESLMKDGDKNNDGRIDFDEFLKMMEGVQ. The Ca(2+) site is built by aspartate 28, aspartate 30, aspartate 34, glutamate 39, aspartate 64, aspartate 66, serine 68, threonine 70, glutamate 75, aspartate 104, asparagine 106, aspartate 108, tyrosine 110, glutamate 115, aspartate 140, asparagine 142, aspartate 144, arginine 146, and glutamate 151.

This sequence belongs to the troponin C family.

In terms of biological role, troponin is the central regulatory protein of striated muscle contraction. Tn consists of three components: Tn-I which is the inhibitor of actomyosin ATPase, Tn-T which contains the binding site for tropomyosin and Tn-C. The binding of calcium to Tn-C abolishes the inhibitory action of Tn on actin filaments. This is Troponin C, skeletal muscle (TNNC2) from Homo sapiens (Human).